A 227-amino-acid polypeptide reads, in one-letter code: Cytochrome c oxidase subunit 2 (227 aa).

At 1–14 (MAYPFQLGLQDASS) the chain is on the mitochondrial intermembrane side. The chain crosses the membrane as a helical span at residues 15 to 45 (PIMEELTNFHDHTLMIVFLISSLVLYIISSM). The Mitochondrial matrix portion of the chain corresponds to 46–59 (LTTKMTHTSTMDAQ). Residues 60–87 (EVETIWTVLPAVILILIALPSLRILYMM) form a helical membrane-spanning segment. The Mitochondrial intermembrane segment spans residues 88 to 227 (DEINNPVLTV…HFENWSTSMI (140 aa)). Residues histidine 161, cysteine 196, glutamate 198, cysteine 200, histidine 204, and methionine 207 each contribute to the Cu cation site. Glutamate 198 lines the Mg(2+) pocket.

Belongs to the cytochrome c oxidase subunit 2 family. As to quaternary structure, component of the cytochrome c oxidase (complex IV, CIV), a multisubunit enzyme composed of 14 subunits. The complex is composed of a catalytic core of 3 subunits MT-CO1, MT-CO2 and MT-CO3, encoded in the mitochondrial DNA, and 11 supernumerary subunits COX4I, COX5A, COX5B, COX6A, COX6B, COX6C, COX7A, COX7B, COX7C, COX8 and NDUFA4, which are encoded in the nuclear genome. The complex exists as a monomer or a dimer and forms supercomplexes (SCs) in the inner mitochondrial membrane with NADH-ubiquinone oxidoreductase (complex I, CI) and ubiquinol-cytochrome c oxidoreductase (cytochrome b-c1 complex, complex III, CIII), resulting in different assemblies (supercomplex SCI(1)III(2)IV(1) and megacomplex MCI(2)III(2)IV(2)). Found in a complex with TMEM177, COA6, COX18, COX20, SCO1 and SCO2. Interacts with TMEM177 in a COX20-dependent manner. Interacts with COX20. Interacts with COX16. Requires Cu cation as cofactor.

The protein localises to the mitochondrion inner membrane. It catalyses the reaction 4 Fe(II)-[cytochrome c] + O2 + 8 H(+)(in) = 4 Fe(III)-[cytochrome c] + 2 H2O + 4 H(+)(out). In terms of biological role, component of the cytochrome c oxidase, the last enzyme in the mitochondrial electron transport chain which drives oxidative phosphorylation. The respiratory chain contains 3 multisubunit complexes succinate dehydrogenase (complex II, CII), ubiquinol-cytochrome c oxidoreductase (cytochrome b-c1 complex, complex III, CIII) and cytochrome c oxidase (complex IV, CIV), that cooperate to transfer electrons derived from NADH and succinate to molecular oxygen, creating an electrochemical gradient over the inner membrane that drives transmembrane transport and the ATP synthase. Cytochrome c oxidase is the component of the respiratory chain that catalyzes the reduction of oxygen to water. Electrons originating from reduced cytochrome c in the intermembrane space (IMS) are transferred via the dinuclear copper A center (CU(A)) of subunit 2 and heme A of subunit 1 to the active site in subunit 1, a binuclear center (BNC) formed by heme A3 and copper B (CU(B)). The BNC reduces molecular oxygen to 2 water molecules using 4 electrons from cytochrome c in the IMS and 4 protons from the mitochondrial matrix. In Lophuromys flavopunctatus (Yellow-spotted brush-furred rat), this protein is Cytochrome c oxidase subunit 2 (MT-CO2).